Consider the following 67-residue polypeptide: Photosystem II reaction center protein H (67 aa).

The chain crosses the membrane as a helical span at residues 27-47 (GAVPVMAFIGVLLLVFLVILL).

It belongs to the PsbH family. As to quaternary structure, PSII is composed of 1 copy each of membrane proteins PsbA, PsbB, PsbC, PsbD, PsbE, PsbF, PsbH, PsbI, PsbJ, PsbK, PsbL, PsbM, PsbT, PsbX, PsbY, Psb30/Ycf12, peripheral proteins PsbO, CyanoQ (PsbQ), PsbU, PsbV and a large number of cofactors. It forms dimeric complexes.

Its subcellular location is the cellular thylakoid membrane. Functionally, one of the components of the core complex of photosystem II (PSII), required for its stability and/or assembly. PSII is a light-driven water:plastoquinone oxidoreductase that uses light energy to abstract electrons from H(2)O, generating O(2) and a proton gradient subsequently used for ATP formation. It consists of a core antenna complex that captures photons, and an electron transfer chain that converts photonic excitation into a charge separation. The protein is Photosystem II reaction center protein H of Prochlorococcus marinus (strain MIT 9211).